The primary structure comprises 366 residues: Chalcone synthase B (366 aa).

Residue Cys172 is part of the active site.

The protein belongs to the thiolase-like superfamily. Chalcone/stilbene synthases family.

It carries out the reaction (E)-4-coumaroyl-CoA + 3 malonyl-CoA + 3 H(+) = 2',4,4',6'-tetrahydroxychalcone + 3 CO2 + 4 CoA. The protein operates within secondary metabolite biosynthesis; flavonoid biosynthesis. Functionally, the primary product of this enzyme is 4,2',4',6'-tetrahydroxychalcone (also termed naringenin-chalcone or chalcone) which can under specific conditions spontaneously isomerize into naringenin. The protein is Chalcone synthase B (CHSB) of Ipomoea trifida (Morning glory).